Consider the following 148-residue polypeptide: Ribosome-binding factor A (148 aa).

Positions 120-148 (AKAREGASYAGDADPYRTAEPDADDAPRA) are disordered. Over residues 133-148 (DPYRTAEPDADDAPRA) the composition is skewed to basic and acidic residues.

Belongs to the RbfA family. Monomer. Binds 30S ribosomal subunits, but not 50S ribosomal subunits or 70S ribosomes.

The protein localises to the cytoplasm. One of several proteins that assist in the late maturation steps of the functional core of the 30S ribosomal subunit. Associates with free 30S ribosomal subunits (but not with 30S subunits that are part of 70S ribosomes or polysomes). Required for efficient processing of 16S rRNA. May interact with the 5'-terminal helix region of 16S rRNA. This is Ribosome-binding factor A from Micrococcus luteus (strain ATCC 4698 / DSM 20030 / JCM 1464 / CCM 169 / CCUG 5858 / IAM 1056 / NBRC 3333 / NCIMB 9278 / NCTC 2665 / VKM Ac-2230) (Micrococcus lysodeikticus).